The primary structure comprises 473 residues: uncharacterized protein (473 aa).

A disordered region spans residues 1-86 (MSSSPTESEI…NTSNYGSSRD (86 aa)). Residues 10-19 (ILPKESHNSI) show a composition bias toward basic and acidic residues. Polar residues-rich tracts occupy residues 20 to 39 (DEQS…NSFN) and 55 to 68 (EPVQ…PNMA). The residue at position 64 (S64) is a Phosphoserine. A compositionally biased stretch (low complexity) spans 69–83 (SNESGNSENTSNYGS). 3 RRM domains span residues 95–165 (LWMG…NHLF), 188–260 (IFVG…PIRV), and 305–370 (VFVG…RIRL). Residues 448–473 (MHIPENGNSDTMPVPNTQGKHLSAEE) form a disordered region. Over residues 453–467 (NGNSDTMPVPNTQGK) the composition is skewed to polar residues.

This is an uncharacterized protein from Schizosaccharomyces pombe (strain 972 / ATCC 24843) (Fission yeast).